We begin with the raw amino-acid sequence, 549 residues long: Oxygen-dependent choline dehydrogenase (549 aa).

4–33 (DFVIIGSGSAGSALAYRLSEGGKNSVIVIE) lines the FAD pocket. His465 functions as the Proton acceptor in the catalytic mechanism.

The protein belongs to the GMC oxidoreductase family. FAD is required as a cofactor.

It catalyses the reaction choline + A = betaine aldehyde + AH2. The enzyme catalyses betaine aldehyde + NAD(+) + H2O = glycine betaine + NADH + 2 H(+). It functions in the pathway amine and polyamine biosynthesis; betaine biosynthesis via choline pathway; betaine aldehyde from choline (cytochrome c reductase route): step 1/1. Its function is as follows. Involved in the biosynthesis of the osmoprotectant glycine betaine. Catalyzes the oxidation of choline to betaine aldehyde and betaine aldehyde to glycine betaine at the same rate. The polypeptide is Oxygen-dependent choline dehydrogenase (Rhizobium johnstonii (strain DSM 114642 / LMG 32736 / 3841) (Rhizobium leguminosarum bv. viciae)).